We begin with the raw amino-acid sequence, 517 residues long: MSDTNKQVRVRFAPSPTGPLHIGGVRTALYNYLFARKMGGKMLLRIEDTDQNRFVPGAEAYIQEALAWVGIVIDEGAGVGGPHAPYKQSERKPMYREYAEKLIAEGNAYYAFDTSEELEAMKERLKAAKVASPSYNMVTRMQMNNSLTLPEDEVKRRLDAGDEYVIRLKVPRKEEIRLNDMIRGWVVVHSSTIDDKVLLKSDGMPTYHLANIVDDHLMEITHVIRGEEWLPSAPLHVLLYRFLGWEDTMPQFAHLPLLLKPDGNGKLSKRDADAGGFPIFPLDWKDPASGDTWIGFKQQGYLQEATTNFLAFLGWNPGTQQELFTMDELIEAFTVERIGKSGTKFDINKAKWYNQQYMRQLPDETLTRLLKEEADKHQAKYDAAKLPLIAQMLKERLTFAKDYWIEGQFFFEAPETFDEKVASTKWNAEAVTVISAYKEALAAYTGEFNAENVKHVLHEVLEKADVKIGKIMQALRLALTGAGAGPDLMQFIEIVGKEEAIKRMQFALITLSEKVNS.

Residues 14–24 (PSPTGPLHIGG) carry the 'HIGH' region motif. The 'KMSKS' region signature appears at 266-270 (KLSKR). Lys-269 lines the ATP pocket.

Belongs to the class-I aminoacyl-tRNA synthetase family. Glutamate--tRNA ligase type 1 subfamily. In terms of assembly, monomer.

Its subcellular location is the cytoplasm. It catalyses the reaction tRNA(Glu) + L-glutamate + ATP = L-glutamyl-tRNA(Glu) + AMP + diphosphate. Functionally, catalyzes the attachment of glutamate to tRNA(Glu) in a two-step reaction: glutamate is first activated by ATP to form Glu-AMP and then transferred to the acceptor end of tRNA(Glu). The chain is Glutamate--tRNA ligase from Cytophaga hutchinsonii (strain ATCC 33406 / DSM 1761 / CIP 103989 / NBRC 15051 / NCIMB 9469 / D465).